We begin with the raw amino-acid sequence, 96 residues long: Glycine-rich protein DC7.1 (96 aa).

The N-terminal stretch at 1–25 (MGSKIFLLLGLSIAFALLISSEVAA) is a signal peptide. A disordered region spans residues 29–66 (SETTTEGASLDGGHHGGGGGGHYSGGGGHGGSHHGGGG). 2 tandem repeats follow at residues 42–50 (HHGGGGGGH) and 61–67 (HHGGGGH). Positions 42 to 67 (HHGGGGGGHYSGGGGHGGSHHGGGGH) are 2 approximate repeats of H-H-G(4,6)-H. A compositionally biased stretch (gly residues) spans 43-66 (HGGGGGGHYSGGGGHGGSHHGGGG).

It belongs to the GRP family.

Functionally, may be connected with the initiation of embryogenesis or with the metabolic changes produced by the removal of auxins. In Daucus carota (Wild carrot), this protein is Glycine-rich protein DC7.1.